A 73-amino-acid polypeptide reads, in one-letter code: Putative antimicrobial peptide clone 4 (73 aa).

The first 22 residues, 1-22 (MQMKYLIPIFFLVLIVADHCHA), serve as a signal peptide directing secretion. The propeptide occupies 45 to 73 (DITSQIEQYRNLQKREAELEDILANLPVY).

The protein belongs to the non-disulfide-bridged peptide (NDBP) superfamily. Short antimicrobial peptide (group 4) family. In terms of tissue distribution, expressed by the venom gland.

Its subcellular location is the secreted. Its function is as follows. Antimicrobial peptide. Has a high antibacterial activity against the Gram-positive bacterium S.aureus (MIC=5-17.30 uM), the methicillin-resistant S.aureus (MRSA) (MIC=17.30 uM), and E.faecalis (MIC=69.23 uM). Has antifungal activity against Candida spp. and one Cryptococcus neoformans strains with MICs values ranging from 6.25 to 100 uM. Also shows an inhibitory activity on C.albicans biofilms at high concentrations. Has a moderate hemolytic potency (18% at 20 uM). Also inhibits the growth of the five cancer cell lines tested. In the model of polymicrobial sepsis, it exhibits an antibiotic effect, reducing the levels of microorganisms in the infectious focus and the inflammatory responses in the lung and cecum of septic animals. This chain is Putative antimicrobial peptide clone 4, found in Tityus costatus (Brazilian scorpion).